Here is a 349-residue protein sequence, read N- to C-terminus: D-alanine--D-alanine ligase (349 aa).

Residues 140–345 (NILFEAMGIP…MKDVFTWLLE (206 aa)) form the ATP-grasp domain. Residue 169-224 (NLSFSYPVFIKPTLGGSSVNTGMAKTAEEAMTLVDKIFVTDDRVLVQKLVSGTEVS) coordinates ATP. Residues D300, E312, and N314 each contribute to the Mg(2+) site.

The protein belongs to the D-alanine--D-alanine ligase family. The cofactor is Mg(2+). It depends on Mn(2+) as a cofactor.

It is found in the cytoplasm. It carries out the reaction 2 D-alanine + ATP = D-alanyl-D-alanine + ADP + phosphate + H(+). It participates in cell wall biogenesis; peptidoglycan biosynthesis. Cell wall formation. In Leptospira biflexa serovar Patoc (strain Patoc 1 / Ames), this protein is D-alanine--D-alanine ligase.